The following is a 273-amino-acid chain: MGQKVNSNGLRFGINKNWISRWTANSHAQTAKWLIEDEKIRNLFFVNYRNAQVSNVEIERTQATVDVFVYAAQPAFLIGSENKNIQKITKQIKQIIGRTTNLDLTINEIGSPMLSARIIARDLANAIEARVPLRTAMRQSLIKVLKAGANGIKVLVSGRLNGAEIARDKMYIEGNMPLSTLRADIDYALEKAQTTYGVIGVKVWINRGMIYTKGLNRTPAHILHPQKKQPNRQNQQPRHFNQGQVLSANKLTGSDVETSSIQALTKPNKEDKQ.

The KH type-2 domain occupies 40-110 (IRNLFFVNYR…NLDLTINEIG (71 aa)). Polar residues predominate over residues 244–265 (QVLSANKLTGSDVETSSIQALT). Positions 244–273 (QVLSANKLTGSDVETSSIQALTKPNKEDKQ) are disordered.

Belongs to the universal ribosomal protein uS3 family. Part of the 30S ribosomal subunit. Forms a tight complex with proteins S10 and S14.

In terms of biological role, binds the lower part of the 30S subunit head. Binds mRNA in the 70S ribosome, positioning it for translation. This chain is Small ribosomal subunit protein uS3, found in Mycoplasma pneumoniae (strain ATCC 29342 / M129 / Subtype 1) (Mycoplasmoides pneumoniae).